The sequence spans 310 residues: Tagatose-6-phosphate kinase (310 aa).

It belongs to the carbohydrate kinase PfkB family. LacC subfamily.

It catalyses the reaction D-tagatofuranose 6-phosphate + ATP = D-tagatofuranose 1,6-bisphosphate + ADP + H(+). It participates in carbohydrate metabolism; D-tagatose 6-phosphate degradation; D-glyceraldehyde 3-phosphate and glycerone phosphate from D-tagatose 6-phosphate: step 1/2. The polypeptide is Tagatose-6-phosphate kinase (Staphylococcus aureus (strain bovine RF122 / ET3-1)).